The chain runs to 722 residues: Serine/threonine-protein kinase dkf-1 (722 aa).

2 consecutive Phorbol-ester/DAG-type zinc fingers follow at residues 98-148 and 186-236; these read PHVV…RNNC and PHTL…ASNC. Residues 279–407 enclose the PH domain; sequence KKLEGWMMHF…QFIKESLQPP (129 aa). In terms of domain architecture, Protein kinase spans 426-685; sequence VLSDKTLGSG…IEQCLDHGWL (260 aa). ATP contacts are provided by residues 432–440 and Lys-455; that span reads LGSGQFGTV. Asp-551 (proton acceptor) is an active-site residue. Phosphothreonine is present on Thr-588.

The protein belongs to the protein kinase superfamily. CAMK Ser/Thr protein kinase family. PKD subfamily. Mg(2+) serves as cofactor. Prolonged phosphorylation at Thr-588 results in ubiquitination and degradation. Highly expressed in embryos and at lower levels through the four larval stages in adults. Present in a region bounded by the anterior and posterior bulbs of the pharynx and an area of the tail containing the lumbar, dorsorectal and pre-anal ganglia. Expressed in neurons.

The protein localises to the cytoplasm. It is found in the membrane. The enzyme catalyses L-seryl-[protein] + ATP = O-phospho-L-seryl-[protein] + ADP + H(+). The catalysed reaction is L-threonyl-[protein] + ATP = O-phospho-L-threonyl-[protein] + ADP + H(+). Activated by DAG and phorbol esters. Phorbol-ester/DAG-type domain 1 binds phorbol ester with high affinity and mediates accumulation at the cell periphery. Phorbol-ester/DAG-type domain 2 binds phorbol ester with low affinity but may mediate initial contact, resulting in a conformational change allowing previously occluded domain 1 to anchor the kinase. Phosphorylation on Thr-588 is then also required for activation and may also result in a further conformational change. Its function is as follows. Converts transient diacylglycerol (DAG) signals into prolonged physiological effects, independently of PKC. Role in the regulation of growth and neuromuscular control of movement. Involved in immune response to S.aureus bacterium by activating transcription factor hlh-30 downstream of phospholipase plc-1. The polypeptide is Serine/threonine-protein kinase dkf-1 (dkf-1) (Caenorhabditis elegans).